A 150-amino-acid polypeptide reads, in one-letter code: MPIVDTGSVAPLSAAEKTKIRSAWAPVYSTYETSGVDILVKFFTSTPAAQEFFPKFKGLTTADQLKKSADVRWHAERIINAVNDAVASMDDTEKMSMKLRDLSGKHAKSFQVDPQYFKVLAAVIADTVAAGDAGFEKLMSMICILLRSAY.

The Globin domain occupies 11-150 (PLSAAEKTKI…MICILLRSAY (140 aa)). Heme b-binding residues include H74 and H106.

This sequence belongs to the globin family. In terms of assembly, monomer at high oxygen tension and high pH and dimeric at low oxygen tension and lower pH.

The chain is Globin-5 from Petromyzon marinus (Sea lamprey).